A 330-amino-acid chain; its full sequence is Neurogenic differentiation factor 4 (330 aa).

Residues 1–79 form a disordered region; it reads MTKTYTKAKE…RGPKKKKMTK (79 aa). Over residues 25–35 the composition is skewed to basic and acidic residues; sequence LSSKDELKAEN. Residues 52-64 are compositionally biased toward acidic residues; it reads DSIEEEEEEEDDG. Over residues 67-79 the composition is skewed to basic residues; the sequence is PKRRGPKKKKMTK. The short motif at 73-79 is the Nuclear localization signal element; that stretch reads KKKKMTK. The region spanning 87–139 is the bHLH domain; that stretch reads ARRVKANARERTRMHGLNDALDNLRRVMPCYSKTQKLSKIETLRLARNYIWAL. Residues 162-183 form a leucine-zipper region; the sequence is LSQPTSNLVAGCLQLGPQTLFL.

As to quaternary structure, efficient DNA binding requires dimerization with another bHLH protein. Post-translationally, serine or threonine phosphorylation within the basic region may regulate neurogenic activity. In terms of tissue distribution, expressed in both the developing central nervous system and peripheral nervous system.

Its subcellular location is the nucleus. Probably acts as a transcriptional activator. Mediates neuronal differentiation. Required for the regulation of amacrine cell fate specification in the retina. This Gallus gallus (Chicken) protein is Neurogenic differentiation factor 4 (NEUROD4).